The sequence spans 88 residues: Large ribosomal subunit protein eL37 (88 aa).

Zn(2+) contacts are provided by Cys17, Cys20, Cys32, and Cys35. A C4-type zinc finger spans residues Cys17 to Cys35.

Belongs to the eukaryotic ribosomal protein eL37 family. Zn(2+) is required as a cofactor.

Functionally, binds to the 23S rRNA. In Candida albicans (Yeast), this protein is Large ribosomal subunit protein eL37 (RPL37).